A 159-amino-acid polypeptide reads, in one-letter code: Succinate dehydrogenase [ubiquinone] cytochrome b small subunit, mitochondrial (159 aa).

The N-terminal 56 residues, 1–56, are a transit peptide targeting the mitochondrion; sequence MAVLLKLGVLCSGQGARALSLRSRAVRPAFVSAFLQDQPTPGWRGTQHIHLSPSHQ. The Mitochondrial matrix segment spans residues 57-63; it reads SGSKAAS. The chain crosses the membrane as a helical span at residues 64-85; it reads LHWTSERVVSVLLLGLIPAGYL. The Mitochondrial intermembrane segment spans residues 86 to 90; the sequence is NPCSV. The helical transmembrane segment at 91-111 threads the bilayer; sequence VDYSLAAALTLHSHWGIGQVV. Heme b is bound at residue His-102. Residues 112–120 lie on the Mitochondrial matrix side of the membrane; it reads TDYVHGDAL. An a ubiquinone-binding site is contributed by Tyr-114. A helical transmembrane segment spans residues 121–142; the sequence is QKATKAGLLAVSALTFAGLCYF. Residues 143–159 lie on the Mitochondrial intermembrane side of the membrane; it reads NYHDVGICRAVAMLWKL.

This sequence belongs to the CybS family. Component of complex II composed of four subunits: the flavoprotein (FP) SDHA, iron-sulfur protein (IP) SDHB, and a cytochrome b560 composed of SDHC and SDHD.

The protein resides in the mitochondrion inner membrane. It participates in carbohydrate metabolism; tricarboxylic acid cycle. Membrane-anchoring subunit of succinate dehydrogenase (SDH) that is involved in complex II of the mitochondrial electron transport chain and is responsible for transferring electrons from succinate to ubiquinone (coenzyme Q). SDH also oxidizes malate to the non-canonical enol form of oxaloacetate, enol-oxaloacetate. Enol-oxaloacetate, which is a potent inhibitor of the succinate dehydrogenase activity, is further isomerized into keto-oxaloacetate. The sequence is that of Succinate dehydrogenase [ubiquinone] cytochrome b small subunit, mitochondrial (Sdhd) from Rattus norvegicus (Rat).